The following is a 127-amino-acid chain: Glycine cleavage system H protein (127 aa).

Residues N22 to K104 form the Lipoyl-binding domain. K63 is modified (N6-lipoyllysine).

This sequence belongs to the GcvH family. The glycine cleavage system is composed of four proteins: P, T, L and H. Requires (R)-lipoate as cofactor.

Functionally, the glycine cleavage system catalyzes the degradation of glycine. The H protein shuttles the methylamine group of glycine from the P protein to the T protein. Its function is as follows. Is also involved in protein lipoylation via its role as an octanoyl/lipoyl carrier protein intermediate. This is Glycine cleavage system H protein from Geobacillus kaustophilus (strain HTA426).